Here is a 357-residue protein sequence, read N- to C-terminus: GTPase Obg (357 aa).

Residues 1-158 enclose the Obg domain; that stretch reads MFVDNIKLKV…LEIVLELKLI (158 aa). An OBG-type G domain is found at 159–345; that stretch reads ADVGLVGFPN…LKFALFDLVE (187 aa). GTP contacts are provided by residues 165–172, 190–194, 212–215, 280–283, and 326–328; these read GFPNAGKS, FTTLT, DIPG, TKCD, and SSV. Mg(2+) contacts are provided by S172 and T192.

The protein belongs to the TRAFAC class OBG-HflX-like GTPase superfamily. OBG GTPase family. Monomer. Mg(2+) is required as a cofactor.

The protein localises to the cytoplasm. Functionally, an essential GTPase which binds GTP, GDP and possibly (p)ppGpp with moderate affinity, with high nucleotide exchange rates and a fairly low GTP hydrolysis rate. Plays a role in control of the cell cycle, stress response, ribosome biogenesis and in those bacteria that undergo differentiation, in morphogenesis control. The protein is GTPase Obg of Nautilia profundicola (strain ATCC BAA-1463 / DSM 18972 / AmH).